The chain runs to 149 residues: Transcriptional repressor NrdR (149 aa).

A zinc finger lies at 3–34 (CPFCSTEETKVIDSRLVSDGYQVRRRRECTKC). An ATP-cone domain is found at 49–139 (PKIIKNNGMR…VYLSFENINE (91 aa)).

This sequence belongs to the NrdR family. Requires Zn(2+) as cofactor.

Negatively regulates transcription of bacterial ribonucleotide reductase nrd genes and operons by binding to NrdR-boxes. The protein is Transcriptional repressor NrdR of Mannheimia succiniciproducens (strain KCTC 0769BP / MBEL55E).